The chain runs to 628 residues: MSKVIGIDLGTTNSCVAVYENGEAKIIPNKEGKNTTPSIVAYTDKGEVLVGDPAKRQAITNPEKTIYSIKRIMGLMMNEPNAKEAQSKVGYKIVDRNGAAAVEIAGKVYTPQEISAKILGKLKADAEEYLGDKVTDAVITVPAYFNDAQRKATQEAGTIAGLNVLRIINEPTAASLAYGLDKKGEEKVLVYDLGGGTFDVTVLEIGDGTFEVLSTDGNAFLGGDDFDNAIIDWLAKEFKDENGFDIKNDKMALQRLKDAAENAKKELSSAESTEINLPFISMGNAGPIHLVKSLTRAKFESMTEKLIDETLDHIKIALKEAGLSKGDIDEIIMVGGSTRLPKANQVVKEFFGKDLNKGVNPDEVVAAGAAVQAGVLRGDVKDVLLLDVTPLSLGIETLGGVMTKLIDKGTTIPVKKSQVFSTADDNQPAVSIHVCQGEREFAKDNKSLGMFELSDIPAAPRGVPQIEVTFDIDANGVLNVSAKDKGTGKENKITISGSSGLSDAEIEKMVAEAEANKEADAKKKAVIEVRNQADALLHSTRKTLEENENAISEDEKKAIIDAAADLEETLKDENATKEQIEEKLKTLTDKSHKLAEAMYKKEQGEQAGAQPNQKAKKDDDDVIDAEVE.

Position 197 is a phosphothreonine; by autocatalysis (Thr197). Basic and acidic residues predominate over residues 595–604 (AEAMYKKEQG). Residues 595–628 (AEAMYKKEQGEQAGAQPNQKAKKDDDDVIDAEVE) form a disordered region.

Belongs to the heat shock protein 70 family.

In terms of biological role, acts as a chaperone. In Aliarcobacter butzleri (strain RM4018) (Arcobacter butzleri), this protein is Chaperone protein DnaK.